Reading from the N-terminus, the 213-residue chain is Thiamine-phosphate synthase (213 aa).

4-amino-2-methyl-5-(diphosphooxymethyl)pyrimidine-binding positions include 39–43 and D71; that span reads QYRDK. Mg(2+) is bound by residues D72 and D91. S108 lines the 4-amino-2-methyl-5-(diphosphooxymethyl)pyrimidine pocket. Residue 135-137 coordinates 2-[(2R,5Z)-2-carboxy-4-methylthiazol-5(2H)-ylidene]ethyl phosphate; sequence TDT. K138 is a binding site for 4-amino-2-methyl-5-(diphosphooxymethyl)pyrimidine. 2-[(2R,5Z)-2-carboxy-4-methylthiazol-5(2H)-ylidene]ethyl phosphate is bound by residues G165 and 185–186; that span reads VS.

This sequence belongs to the thiamine-phosphate synthase family. The cofactor is Mg(2+).

The catalysed reaction is 2-[(2R,5Z)-2-carboxy-4-methylthiazol-5(2H)-ylidene]ethyl phosphate + 4-amino-2-methyl-5-(diphosphooxymethyl)pyrimidine + 2 H(+) = thiamine phosphate + CO2 + diphosphate. The enzyme catalyses 2-(2-carboxy-4-methylthiazol-5-yl)ethyl phosphate + 4-amino-2-methyl-5-(diphosphooxymethyl)pyrimidine + 2 H(+) = thiamine phosphate + CO2 + diphosphate. It catalyses the reaction 4-methyl-5-(2-phosphooxyethyl)-thiazole + 4-amino-2-methyl-5-(diphosphooxymethyl)pyrimidine + H(+) = thiamine phosphate + diphosphate. It functions in the pathway cofactor biosynthesis; thiamine diphosphate biosynthesis; thiamine phosphate from 4-amino-2-methyl-5-diphosphomethylpyrimidine and 4-methyl-5-(2-phosphoethyl)-thiazole: step 1/1. Condenses 4-methyl-5-(beta-hydroxyethyl)thiazole monophosphate (THZ-P) and 2-methyl-4-amino-5-hydroxymethyl pyrimidine pyrophosphate (HMP-PP) to form thiamine monophosphate (TMP). The polypeptide is Thiamine-phosphate synthase (Thermoplasma acidophilum (strain ATCC 25905 / DSM 1728 / JCM 9062 / NBRC 15155 / AMRC-C165)).